A 188-amino-acid chain; its full sequence is Protein GrpE (188 aa).

Residues 1 to 16 (MEERNEQVVEEVKEAQ) are compositionally biased toward basic and acidic residues. Residues 1–31 (MEERNEQVVEEVKEAQVEEAVTPENSEETVE) are disordered.

Belongs to the GrpE family. In terms of assembly, homodimer.

The protein localises to the cytoplasm. Its function is as follows. Participates actively in the response to hyperosmotic and heat shock by preventing the aggregation of stress-denatured proteins, in association with DnaK and GrpE. It is the nucleotide exchange factor for DnaK and may function as a thermosensor. Unfolded proteins bind initially to DnaJ; upon interaction with the DnaJ-bound protein, DnaK hydrolyzes its bound ATP, resulting in the formation of a stable complex. GrpE releases ADP from DnaK; ATP binding to DnaK triggers the release of the substrate protein, thus completing the reaction cycle. Several rounds of ATP-dependent interactions between DnaJ, DnaK and GrpE are required for fully efficient folding. This is Protein GrpE from Bacillus cereus (strain G9842).